Consider the following 78-residue polypeptide: D-alanyl carrier protein (78 aa).

The region spanning 1–78 (MEFKQEVLDV…NIVNKLTELK (78 aa)) is the Carrier domain. S36 is subject to O-(pantetheine 4'-phosphoryl)serine.

This sequence belongs to the DltC family. 4'-phosphopantetheine is transferred from CoA to a specific serine of apo-DCP.

Its subcellular location is the cytoplasm. It participates in cell wall biogenesis; lipoteichoic acid biosynthesis. Carrier protein involved in the D-alanylation of lipoteichoic acid (LTA). The loading of thioester-linked D-alanine onto DltC is catalyzed by D-alanine--D-alanyl carrier protein ligase DltA. The DltC-carried D-alanyl group is further transferred to cell membrane phosphatidylglycerol (PG) by forming an ester bond, probably catalyzed by DltD. D-alanylation of LTA plays an important role in modulating the properties of the cell wall in Gram-positive bacteria, influencing the net charge of the cell wall. The chain is D-alanyl carrier protein from Bacillus velezensis (strain DSM 23117 / BGSC 10A6 / LMG 26770 / FZB42) (Bacillus amyloliquefaciens subsp. plantarum).